The sequence spans 381 residues: Cytosolic acyl coenzyme A thioester hydrolase (381 aa).

In terms of domain architecture, HotDog ACOT-type 1 spans 51–169 (LGHCVTMGRI…TLWYVPLSLK (119 aa)). Asparagine 67 is an active-site residue. N6-acetyllysine is present on residues lysine 169 and lysine 199. The HotDog ACOT-type 2 domain occupies 225–339 (SYSQSSLIHL…FFTYVSLNQE (115 aa)). The active site involves aspartate 256. N6-acetyllysine is present on lysine 284. Positions 342 to 381 (PMPVPQLVPETEDEKKRFEEGKGRYLQMKAKRQGHTEPQP) are disordered. Basic and acidic residues predominate over residues 354–364 (DEKKRFEEGKG).

Homohexamer. Widely expressed with highest levels in brain. High levels also found in thymus, large intestine and testis. Negligible in muscle and adipose tissue. In the central and peripheral nervous systems, displays a predominantly neuronal localization with highest expression in cell bodies and neurites.

It localises to the cytoplasm. The protein resides in the cytosol. It carries out the reaction hexadecanoyl-CoA + H2O = hexadecanoate + CoA + H(+). It catalyses the reaction dodecanoyl-CoA + H2O = dodecanoate + CoA + H(+). The enzyme catalyses tetradecanoyl-CoA + H2O = tetradecanoate + CoA + H(+). The catalysed reaction is decanoyl-CoA + H2O = decanoate + CoA + H(+). It carries out the reaction octanoyl-CoA + H2O = octanoate + CoA + H(+). It catalyses the reaction octadecanoyl-CoA + H2O = octadecanoate + CoA + H(+). The enzyme catalyses (9Z)-octadecenoyl-CoA + H2O = (9Z)-octadecenoate + CoA + H(+). The protein operates within lipid metabolism; fatty acid metabolism. In terms of biological role, catalyzes the hydrolysis of acyl-CoAs into free fatty acids and coenzyme A (CoASH), regulating their respective intracellular levels. Preferentially hydrolyzes palmitoyl-CoA, but has a broad specificity acting on other fatty acyl-CoAs with chain-lengths of C8-C18. May play an important physiological function in brain. This chain is Cytosolic acyl coenzyme A thioester hydrolase (Acot7), found in Mus musculus (Mouse).